Reading from the N-terminus, the 141-residue chain is Large ribosomal subunit protein uL11 (141 aa).

Belongs to the universal ribosomal protein uL11 family. In terms of assembly, part of the ribosomal stalk of the 50S ribosomal subunit. Interacts with L10 and the large rRNA to form the base of the stalk. L10 forms an elongated spine to which L12 dimers bind in a sequential fashion forming a multimeric L10(L12)X complex. Post-translationally, one or more lysine residues are methylated.

Its function is as follows. Forms part of the ribosomal stalk which helps the ribosome interact with GTP-bound translation factors. This chain is Large ribosomal subunit protein uL11, found in Synechocystis sp. (strain ATCC 27184 / PCC 6803 / Kazusa).